The chain runs to 250 residues: GILT-like protein 1 (250 aa).

The N-terminal stretch at 1–21 (MSHKIAAVCLLMSCLIATAYS) is a signal peptide. Residue Asn-157 is glycosylated (N-linked (GlcNAc...) asparagine).

The protein belongs to the GILT family. In terms of processing, conjugated to URM1, a ubiquitin-like protein.

Its subcellular location is the secreted. Functionally, involved in the immune response to bacterial infection. This is GILT-like protein 1 from Drosophila melanogaster (Fruit fly).